A 116-amino-acid polypeptide reads, in one-letter code: MNLIMSSVAATALISLILAFVAFWLPSLNPDNEKLSPYECGFDPLGSARLPFSLRFFLVAILFLLFDLEIALLLPLPWGNQLLTPSISLLWATSIIILLTLGLIYEWLQGGLEWAE.

3 consecutive transmembrane segments (helical) span residues 8–28 (VAAT…LPSL), 56–76 (FFLV…LLPL), and 87–107 (ISLL…IYEW).

Belongs to the complex I subunit 3 family.

Its subcellular location is the mitochondrion membrane. It catalyses the reaction a ubiquinone + NADH + 5 H(+)(in) = a ubiquinol + NAD(+) + 4 H(+)(out). Core subunit of the mitochondrial membrane respiratory chain NADH dehydrogenase (Complex I) that is believed to belong to the minimal assembly required for catalysis. Complex I functions in the transfer of electrons from NADH to the respiratory chain. The immediate electron acceptor for the enzyme is believed to be ubiquinone. The polypeptide is NADH-ubiquinone oxidoreductase chain 3 (MT-ND3) (Squalus acanthias (Spiny dogfish)).